Consider the following 456-residue polypeptide: Cyclic AMP-responsive element-binding protein 3-like protein 3 (456 aa).

2 disordered regions span residues 1–20 (MDGDLAIGKMASSTSPMGPI) and 47–120 (GHGE…KGPC). Residues 1-317 (MDGDLAIGKM…STSKSAQTGT (317 aa)) lie on the Cytoplasmic side of the membrane. Polar residues predominate over residues 71–85 (DSDSPTWSPAASDSG). The 64-residue stretch at 238–301 (MLKKIRRKIR…LSLLEQLKKL (64 aa)) folds into the bZIP domain. Positions 240 to 269 (KKIRRKIRNKQSAQESRKKKKEYIDGLETR) are basic motif. Residues 280–301 (LQRKVLHLEKQNLSLLEQLKKL) form a leucine-zipper region. Lys289 is covalently cross-linked (Glycyl lysine isopeptide (Lys-Gly) (interchain with G-Cter in ubiquitin)). Residues 318–338 (CIAVLLFSFALIVLPSISPFA) traverse the membrane as a helical; Signal-anchor for type II membrane protein segment. Residues 339 to 456 (SNRAESPGDF…VGLEAAGGEL (118 aa)) are Lumenal-facing. Disordered regions lie at residues 365–423 (RVAP…QGNS) and 435–456 (CAPPEPAVSPGHVGLEAAGGEL). Asn408 and Asn415 each carry an N-linked (GlcNAc...) asparagine glycan.

It belongs to the bZIP family. ATF subfamily. In terms of assembly, binds DNA as a dimer. May form homodimers. Interacts with ATF6. Interacts with SYNV1/HRD1; this interaction leads to CREB3L3 ubiquitination and proteasomal degradation. Controlled by regulated intramembrane proteolysis (RIP). Following ER stress a fragment containing the cytoplasmic transcription factor domain is released by proteolysis. The cleavage seems to be performed sequentially by site-1 and site-2 proteases (PS1 and PS2). Post-translationally, N-glycosylation is required for optimal proteolytic activation. In terms of processing, ubiquitinated at Lys-289 by SYNV1/HRD1 via 'Lys-27'-linked ubiquitin.

Its subcellular location is the endoplasmic reticulum membrane. It is found in the nucleus. In terms of biological role, transcription factor that may act during endoplasmic reticulum stress by activating unfolded protein response target genes. Activated in response to cAMP stimulation. In vitro, binds the cAMP response element (CRE). Activates transcription through box-B element and CRE. Seems to function synergistically with ATF6. In acute inflammatory response, may activate expression of acute phase response (APR) genes. May be involved in growth suppression. Regulates FGF21 transcription. Plays a crucial role in the regulation of triglyceride metabolism and is required for the maintenance of normal plasma triglyceride concentrations. The protein is Cyclic AMP-responsive element-binding protein 3-like protein 3 (CREB3L3) of Bos taurus (Bovine).